The sequence spans 545 residues: MTTNYIFVTGGVVSSLGKGIAAASLAAILEARGLNVTIMKLDPYINVDPGTMSPIQHGEVFVTEDGAETDLDLGHYERFIRTKMSRRNNFTTGRIYSDVLRKERRGDYLGATVQVIPHITNAIKERVLEGGEGHDVVLVEIGGTVGDIESLPFLEAIRQLAVDIGREHALFMHLTLVPYLAAAGEVKTKPTQHSVKELLSIGIQPDILICRSDRAVPANERAKIALFCNVPEKAVISMKDVDSIYKIPGLLKSQGLDDYICKRFSLNCPEANLSEWEQVIYEEANPAGEVTIGMVGKYIELPDAYKSVIEALKHGGLKNRVTVNIKLIDSQDVETRGVEILKDLDAILIPGGFGYRGVEGKIATARYARENNIPYLGICLGMQVALIEFARNVAGMDNANSTEFVPDCKYPVVALITEWRDEDGNVEVRSEKSDLGGTMRLGAQQCQLSDDSLVRQLYGASTIVERHRHRYEVNNMLLKQIEAAGLRVAGRSGDDQLVEIIEVPNHPWFVACQFHPEFTSTPRDGHPLFAGFVKAASEHQKRQAK.

Residues 1 to 266 (MTTNYIFVTG…DDYICKRFSL (266 aa)) form an amidoligase domain region. Ser-14 provides a ligand contact to CTP. Ser-14 lines the UTP pocket. ATP contacts are provided by residues 15 to 20 (SLGKGI) and Asp-72. Asp-72 and Glu-140 together coordinate Mg(2+). CTP contacts are provided by residues 147 to 149 (DIE), 187 to 192 (KTKPTQ), and Lys-223. UTP-binding positions include 187–192 (KTKPTQ) and Lys-223. Residue 239–241 (KDV) coordinates ATP. In terms of domain architecture, Glutamine amidotransferase type-1 spans 291–542 (TIGMVGKYIE…VKAASEHQKR (252 aa)). Gly-352 contributes to the L-glutamine binding site. The active-site Nucleophile; for glutamine hydrolysis is the Cys-379. L-glutamine-binding positions include 380–383 (LGMQ), Glu-403, and Arg-470. Catalysis depends on residues His-515 and Glu-517.

This sequence belongs to the CTP synthase family. Homotetramer.

It catalyses the reaction UTP + L-glutamine + ATP + H2O = CTP + L-glutamate + ADP + phosphate + 2 H(+). The enzyme catalyses L-glutamine + H2O = L-glutamate + NH4(+). The catalysed reaction is UTP + NH4(+) + ATP = CTP + ADP + phosphate + 2 H(+). It functions in the pathway pyrimidine metabolism; CTP biosynthesis via de novo pathway; CTP from UDP: step 2/2. With respect to regulation, allosterically activated by GTP, when glutamine is the substrate; GTP has no effect on the reaction when ammonia is the substrate. The allosteric effector GTP functions by stabilizing the protein conformation that binds the tetrahedral intermediate(s) formed during glutamine hydrolysis. Inhibited by the product CTP, via allosteric rather than competitive inhibition. Functionally, catalyzes the ATP-dependent amination of UTP to CTP with either L-glutamine or ammonia as the source of nitrogen. Regulates intracellular CTP levels through interactions with the four ribonucleotide triphosphates. In Salmonella schwarzengrund (strain CVM19633), this protein is CTP synthase.